Reading from the N-terminus, the 397-residue chain is Lysophospholipid transporter LplT (397 aa).

Transmembrane regions (helical) follow at residues 16-36 (MLAV…LLFA), 53-73 (VLQM…GQFA), 91-111 (LGAG…LVGI), 139-159 (LMES…GILA), 164-184 (LAAL…NLWI), 227-247 (LFWG…PVAL), 253-273 (AMPT…AGAA), 281-301 (TVSR…AFAV), 305-325 (LLPA…FIVP), 352-372 (NVAM…GVPP), and 373-393 (VAVG…LWVW).

The protein belongs to the major facilitator superfamily. LplT (TC 2.A.1.42) family.

It is found in the cell inner membrane. Functionally, catalyzes the facilitated diffusion of 2-acyl-glycero-3-phosphoethanolamine (2-acyl-GPE) into the cell. The chain is Lysophospholipid transporter LplT from Klebsiella pneumoniae (strain 342).